Reading from the N-terminus, the 236-residue chain is Purine nucleoside phosphorylase (236 aa).

An a purine D-ribonucleoside-binding site is contributed by histidine 5. Residues glycine 21, arginine 25, arginine 43, and 86–89 each bind phosphate; that span reads RYGT. A purine D-ribonucleoside is bound by residues glutamate 163, 180–182, and 204–205; these read EME and SD.

This sequence belongs to the PNP/UDP phosphorylase family. In terms of assembly, homohexamer; disulfide-linked. Trimer of homodimers, with three symmetric intersubunit disulfide bonds linking the dimers to one another.

The catalysed reaction is S-methyl-5'-thioadenosine + phosphate = 5-(methylsulfanyl)-alpha-D-ribose 1-phosphate + adenine. The enzyme catalyses a purine D-ribonucleoside + phosphate = a purine nucleobase + alpha-D-ribose 1-phosphate. It catalyses the reaction a purine 2'-deoxy-D-ribonucleoside + phosphate = a purine nucleobase + 2-deoxy-alpha-D-ribose 1-phosphate. It participates in purine metabolism; purine nucleoside salvage. Functionally, cleavage of guanosine or inosine to respective bases and sugar-1-phosphate molecules. Cleaves inosine, guanosine, and adenosine with a better efficiency than MTA. This chain is Purine nucleoside phosphorylase, found in Saccharolobus solfataricus (strain ATCC 35092 / DSM 1617 / JCM 11322 / P2) (Sulfolobus solfataricus).